Reading from the N-terminus, the 436-residue chain is Hydrogenobyrinate a,c-diamide synthase (436 aa).

The 192-residue stretch at 244–435 folds into the GATase cobBQ-type domain; sequence HIAVARDDAF…MHVIDFCGEK (192 aa). The active-site Nucleophile is C327.

It belongs to the CobB/CbiA family. Mg(2+) is required as a cofactor.

It catalyses the reaction hydrogenobyrinate + 2 L-glutamine + 2 ATP + 2 H2O = hydrogenobyrinate a,c-diamide + 2 L-glutamate + 2 ADP + 2 phosphate + 2 H(+). Its pathway is cofactor biosynthesis; adenosylcobalamin biosynthesis; cob(II)yrinate a,c-diamide from precorrin-2 (aerobic route): step 9/10. In terms of biological role, catalyzes the ATP-dependent amidation of the two carboxylate groups at positions a and c of hydrogenobyrinate, using either L-glutamine or ammonia as the nitrogen source. This chain is Hydrogenobyrinate a,c-diamide synthase, found in Brucella anthropi (strain ATCC 49188 / DSM 6882 / CCUG 24695 / JCM 21032 / LMG 3331 / NBRC 15819 / NCTC 12168 / Alc 37) (Ochrobactrum anthropi).